The primary structure comprises 66 residues: Large ribosomal subunit protein bL35 (66 aa).

Residues 1–16 (MPKMKTHRGAAKRVKR) show a composition bias toward basic residues. The interval 1–28 (MPKMKTHRGAAKRVKRTGSGQLKRSRAF) is disordered.

It belongs to the bacterial ribosomal protein bL35 family.

This chain is Large ribosomal subunit protein bL35, found in Staphylococcus epidermidis (strain ATCC 35984 / DSM 28319 / BCRC 17069 / CCUG 31568 / BM 3577 / RP62A).